Consider the following 173-residue polypeptide: Crossover junction endodeoxyribonuclease RuvC (173 aa).

Residues Asp8, Glu67, and Asp139 contribute to the active site. Mg(2+) is bound by residues Asp8, Glu67, and Asp139.

The protein belongs to the RuvC family. In terms of assembly, homodimer which binds Holliday junction (HJ) DNA. The HJ becomes 2-fold symmetrical on binding to RuvC with unstacked arms; it has a different conformation from HJ DNA in complex with RuvA. In the full resolvosome a probable DNA-RuvA(4)-RuvB(12)-RuvC(2) complex forms which resolves the HJ. Mg(2+) is required as a cofactor.

The protein localises to the cytoplasm. The enzyme catalyses Endonucleolytic cleavage at a junction such as a reciprocal single-stranded crossover between two homologous DNA duplexes (Holliday junction).. In terms of biological role, the RuvA-RuvB-RuvC complex processes Holliday junction (HJ) DNA during genetic recombination and DNA repair. Endonuclease that resolves HJ intermediates. Cleaves cruciform DNA by making single-stranded nicks across the HJ at symmetrical positions within the homologous arms, yielding a 5'-phosphate and a 3'-hydroxyl group; requires a central core of homology in the junction. The consensus cleavage sequence is 5'-(A/T)TT(C/G)-3'. Cleavage occurs on the 3'-side of the TT dinucleotide at the point of strand exchange. HJ branch migration catalyzed by RuvA-RuvB allows RuvC to scan DNA until it finds its consensus sequence, where it cleaves and resolves the cruciform DNA. In Aliivibrio fischeri (strain ATCC 700601 / ES114) (Vibrio fischeri), this protein is Crossover junction endodeoxyribonuclease RuvC.